A 752-amino-acid chain; its full sequence is Phosphoribosylformylglycinamidine synthase subunit PurL (752 aa).

Residue His-58 is part of the active site. Residues Tyr-61 and Lys-103 each coordinate ATP. Glu-105 contacts Mg(2+). Residues 106–109 and Arg-128 contribute to the substrate site; that span reads SHNH. His-107 functions as the Proton acceptor in the catalytic mechanism. Residue Asp-129 coordinates Mg(2+). Gln-253 is a substrate binding site. Asp-281 contributes to the Mg(2+) binding site. 325 to 327 provides a ligand contact to substrate; that stretch reads ESQ. ATP-binding residues include Asp-513 and Gly-550. Mg(2+) is bound at residue Asn-551. Ser-553 lines the substrate pocket.

The protein belongs to the FGAMS family. As to quaternary structure, monomer. Part of the FGAM synthase complex composed of 1 PurL, 1 PurQ and 2 PurS subunits.

Its subcellular location is the cytoplasm. The enzyme catalyses N(2)-formyl-N(1)-(5-phospho-beta-D-ribosyl)glycinamide + L-glutamine + ATP + H2O = 2-formamido-N(1)-(5-O-phospho-beta-D-ribosyl)acetamidine + L-glutamate + ADP + phosphate + H(+). The protein operates within purine metabolism; IMP biosynthesis via de novo pathway; 5-amino-1-(5-phospho-D-ribosyl)imidazole from N(2)-formyl-N(1)-(5-phospho-D-ribosyl)glycinamide: step 1/2. Functionally, part of the phosphoribosylformylglycinamidine synthase complex involved in the purines biosynthetic pathway. Catalyzes the ATP-dependent conversion of formylglycinamide ribonucleotide (FGAR) and glutamine to yield formylglycinamidine ribonucleotide (FGAM) and glutamate. The FGAM synthase complex is composed of three subunits. PurQ produces an ammonia molecule by converting glutamine to glutamate. PurL transfers the ammonia molecule to FGAR to form FGAM in an ATP-dependent manner. PurS interacts with PurQ and PurL and is thought to assist in the transfer of the ammonia molecule from PurQ to PurL. This Streptomyces avermitilis (strain ATCC 31267 / DSM 46492 / JCM 5070 / NBRC 14893 / NCIMB 12804 / NRRL 8165 / MA-4680) protein is Phosphoribosylformylglycinamidine synthase subunit PurL.